The sequence spans 341 residues: uncharacterized protein (341 aa).

It belongs to the Gfo/Idh/MocA family.

This is an uncharacterized protein from Bacillus subtilis (strain 168).